The following is a 1374-amino-acid chain: Alpha,alpha-trehalose-phosphate synthase [UDP-forming] 1 (1374 aa).

Disordered regions lie at residues 28–66 (DTGKVPTAPPDVFFSTENEPEDCTPVKMDPFDRPKSDKD), 86–117 (YTPGKEKGVDQDESDDMTESEDHDEMAKDDEG), and 1352–1374 (KADSYYDDSDTPMDQEDTPSKQQ). Composition is skewed to basic and acidic residues over residues 56 to 66 (DPFDRPKSDKD) and 86 to 95 (YTPGKEKGVD). 2 stretches are compositionally biased toward acidic residues: residues 96-109 (QDESDDMTESEDHD) and 1356-1368 (YYDDSDTPMDQED).

In the N-terminal section; belongs to the glycosyltransferase 20 family. This sequence in the C-terminal section; belongs to the gob-1 trehalose phosphatase family.

The enzyme catalyses D-glucose 6-phosphate + UDP-alpha-D-glucose = alpha,alpha-trehalose 6-phosphate + UDP + H(+). Its function is as follows. Catalyzes the production of trehalose from glucose-6-phosphate and UDP-alpha-D-glucose in a 2 step process. The sequence is that of Alpha,alpha-trehalose-phosphate synthase [UDP-forming] 1 (tps-1) from Caenorhabditis briggsae.